The following is a 593-amino-acid chain: DNA primase (593 aa).

The CHC2-type zinc finger occupies 38 to 62; it reads CPFHQEKTPSFTVSDSKRFFYCFGC. In terms of domain architecture, Toprim spans 250-332; sequence NRSILVEGYF…EKKISFIRLP (83 aa). Mg(2+)-binding residues include Glu-256, Asp-300, and Asp-302.

This sequence belongs to the DnaG primase family. As to quaternary structure, monomer. Interacts with DnaB. The cofactor is Zn(2+). Requires Mg(2+) as cofactor.

It carries out the reaction ssDNA + n NTP = ssDNA/pppN(pN)n-1 hybrid + (n-1) diphosphate.. RNA polymerase that catalyzes the synthesis of short RNA molecules used as primers for DNA polymerase during DNA replication. The chain is DNA primase from Rickettsia typhi (strain ATCC VR-144 / Wilmington).